A 335-amino-acid polypeptide reads, in one-letter code: Ferrochelatase (335 aa).

The Fe cation site is built by histidine 192 and glutamate 291.

Belongs to the ferrochelatase family.

It localises to the cytoplasm. It carries out the reaction heme b + 2 H(+) = protoporphyrin IX + Fe(2+). Its pathway is porphyrin-containing compound metabolism; protoheme biosynthesis; protoheme from protoporphyrin-IX: step 1/1. Catalyzes the ferrous insertion into protoporphyrin IX. The protein is Ferrochelatase of Bdellovibrio bacteriovorus (strain ATCC 15356 / DSM 50701 / NCIMB 9529 / HD100).